Here is a 164-residue protein sequence, read N- to C-terminus: Large ribosomal subunit protein uL11 (164 aa).

Belongs to the universal ribosomal protein uL11 family. Part of the ribosomal stalk of the 50S ribosomal subunit. Interacts with L10 and the large rRNA to form the base of the stalk. L10 forms an elongated spine to which L12 dimers bind in a sequential fashion forming a multimeric L10(L12)X complex.

Forms part of the ribosomal stalk which helps the ribosome interact with GTP-bound translation factors. The sequence is that of Large ribosomal subunit protein uL11 from Pyrococcus abyssi (strain GE5 / Orsay).